A 751-amino-acid chain; its full sequence is Meiotic sister-chromatid recombination protein 3 (751 aa).

Disordered stretches follow at residues 54–88 (GVGM…RTYS), 216–290 (LRAP…KKQM), 314–410 (PALE…EARF), 431–504 (TQEN…RPSF), and 558–610 (KDVP…SPPQ). The span at 216 to 228 (LRAPPRVQQQRQL) shows a compositional bias: low complexity. 2 stretches are compositionally biased toward basic and acidic residues: residues 345 to 356 (ERSRPAKREVRK) and 384 to 393 (ERVHNKEKTL). A compositionally biased stretch (polar residues) spans 431–496 (TQENSTRDNG…GCETGNTTPK (66 aa)). A compositionally biased stretch (low complexity) spans 596-609 (RSSISSSPRRSSPP).

The protein resides in the cell membrane. Functionally, may be involved in the control of meiotic sister-chromatid recombination. The protein is Meiotic sister-chromatid recombination protein 3 (MSC3) of Eremothecium gossypii (strain ATCC 10895 / CBS 109.51 / FGSC 9923 / NRRL Y-1056) (Yeast).